We begin with the raw amino-acid sequence, 284 residues long: uncharacterized protein (284 aa).

Residues 1–10 show a composition bias toward polar residues; the sequence is MSNSVTNFEM. The disordered stretch occupies residues 1 to 28; that stretch reads MSNSVTNFEMSSVLPGKKPCQGKNNESQ.

This is an uncharacterized protein from Escherichia coli (strain K12).